The primary structure comprises 114 residues: Small ribosomal subunit protein bS16 (114 aa).

The tract at residues 87-114 (AFREQPVQSAPKKKAQERAAERAKAAEA) is disordered. The segment covering 100-114 (KAQERAAERAKAAEA) has biased composition (basic and acidic residues).

The protein belongs to the bacterial ribosomal protein bS16 family.

The polypeptide is Small ribosomal subunit protein bS16 (Acidiphilium cryptum (strain JF-5)).